An 859-amino-acid polypeptide reads, in one-letter code: DNA mismatch repair protein MutS (859 aa).

617–624 (GPNMGGKS) is an ATP binding site. A disordered region spans residues 799 to 821 (ETTSLPHEQPRAKPGKPAVPQQS).

Belongs to the DNA mismatch repair MutS family.

This protein is involved in the repair of mismatches in DNA. It is possible that it carries out the mismatch recognition step. This protein has a weak ATPase activity. This chain is DNA mismatch repair protein MutS, found in Pseudomonas savastanoi pv. phaseolicola (strain 1448A / Race 6) (Pseudomonas syringae pv. phaseolicola (strain 1448A / Race 6)).